Reading from the N-terminus, the 218-residue chain is MIP18 family protein galla-1 (218 aa).

Positions 1 to 59 (MLSYIKRKLSESDSGVSSVATVTSSCGGDSGRAGGTGSSESGTGSSSASISGRSQNADE) are disordered. The span at 12-27 (SDSGVSSVATVTSSCG) shows a compositional bias: low complexity. Position 14 is a phosphoserine (Ser14). The segment covering 28-37 (GDSGRAGGTG) has biased composition (gly residues). Residues 38–54 (SSESGTGSSSASISGRS) show a composition bias toward low complexity. Position 65 is a phosphoserine (Ser65).

Belongs to the MIP18 family. As to quaternary structure, component of the CGX complex composed of crb, galla (galla-1 or galla-2) and Xpd. Interacts with crb (via intracellular domain). Is not able to interact with Xpd in the absence of crb.

It localises to the apical cell membrane. It is found in the cytoplasm. Its subcellular location is the cytoskeleton. The protein localises to the spindle. Its function is as follows. Component of the crb-galla-Xpd (CGX) complex which is essential for proper mitotic chromosome segregation in early embryos. The CGX complex is also required for cell proliferation in developing wing disks. In the CGX complex, acts with crb to recruit Xpd thus forming the functional complex. This chain is MIP18 family protein galla-1, found in Drosophila melanogaster (Fruit fly).